Reading from the N-terminus, the 937-residue chain is Protein translocase subunit SecA (937 aa).

ATP is bound by residues Gln86, 104–108, and Asp493; that span reads GEGKT. Residues 868-889 form a disordered region; it reads LERPSQPTKLAYSAPSEDGDAE. Residues Cys911, Cys913, Cys922, and His923 each coordinate Zn(2+). The interval 915–937 is disordered; the sequence is SGKKFKQCHGRPGGPTGLTARVS.

Belongs to the SecA family. As to quaternary structure, monomer and homodimer. Part of the essential Sec protein translocation apparatus which comprises SecA, SecYEG and auxiliary proteins SecDF. Other proteins may also be involved. The cofactor is Zn(2+).

The protein resides in the cell membrane. The protein localises to the cytoplasm. The catalysed reaction is ATP + H2O + cellular proteinSide 1 = ADP + phosphate + cellular proteinSide 2.. In terms of biological role, part of the Sec protein translocase complex. Interacts with the SecYEG preprotein conducting channel. Has a central role in coupling the hydrolysis of ATP to the transfer of proteins into and across the cell membrane, serving as an ATP-driven molecular motor driving the stepwise translocation of polypeptide chains across the membrane. The polypeptide is Protein translocase subunit SecA (Nocardioides sp. (strain ATCC BAA-499 / JS614)).